The following is a 310-amino-acid chain: Pantothenate kinase (310 aa).

95-102 provides a ligand contact to ATP; that stretch reads GSVAVGKS.

It belongs to the prokaryotic pantothenate kinase family.

The protein resides in the cytoplasm. The catalysed reaction is (R)-pantothenate + ATP = (R)-4'-phosphopantothenate + ADP + H(+). The protein operates within cofactor biosynthesis; coenzyme A biosynthesis; CoA from (R)-pantothenate: step 1/5. In Mycobacteroides abscessus (strain ATCC 19977 / DSM 44196 / CCUG 20993 / CIP 104536 / JCM 13569 / NCTC 13031 / TMC 1543 / L948) (Mycobacterium abscessus), this protein is Pantothenate kinase.